The primary structure comprises 463 residues: tRNA (guanine(10)-N(2))-methyltransferase TRMT11 (463 aa).

At A2 the chain carries N-acetylalanine.

The protein belongs to the class I-like SAM-binding methyltransferase superfamily. TRM11 methyltransferase family. As to quaternary structure, part of the heterodimeric TRMT11-TRM112 methyltransferase complex; this complex forms an active tRNA methyltransferase, where TRMT112 acts as an activator of the catalytic subunit TRMT11.

It is found in the cytoplasm. It catalyses the reaction guanosine(10) in tRNA + S-adenosyl-L-methionine = N(2)-methylguanosine(10) in tRNA + S-adenosyl-L-homocysteine + H(+). Its function is as follows. Catalytic subunit of the TRMT11-TRM112 methyltransferase complex, that specifically mediates the S-adenosyl-L-methionine-dependent N(2)-methylation of guanosine nucleotide at position 10 (m2G10) in tRNAs. This is one of the major tRNA (guanine-N(2))-methyltransferases. The chain is tRNA (guanine(10)-N(2))-methyltransferase TRMT11 from Rattus norvegicus (Rat).